A 166-amino-acid polypeptide reads, in one-letter code: CDP-archaeol synthase (166 aa).

A run of 5 helical transmembrane segments spans residues Leu-7–Ile-27, Leu-55–Ala-75, Thr-78–Ile-98, Leu-116–Tyr-136, and Phe-138–Leu-158.

Belongs to the CDP-archaeol synthase family. The cofactor is Mg(2+).

The protein resides in the cell membrane. The catalysed reaction is 2,3-bis-O-(geranylgeranyl)-sn-glycerol 1-phosphate + CTP + H(+) = CDP-2,3-bis-O-(geranylgeranyl)-sn-glycerol + diphosphate. It functions in the pathway membrane lipid metabolism; glycerophospholipid metabolism. Catalyzes the formation of CDP-2,3-bis-(O-geranylgeranyl)-sn-glycerol (CDP-archaeol) from 2,3-bis-(O-geranylgeranyl)-sn-glycerol 1-phosphate (DGGGP) and CTP. This reaction is the third ether-bond-formation step in the biosynthesis of archaeal membrane lipids. The polypeptide is CDP-archaeol synthase (Saccharolobus islandicus (strain L.S.2.15 / Lassen #1) (Sulfolobus islandicus)).